The chain runs to 345 residues: tRNA N6-adenosine threonylcarbamoyltransferase (345 aa).

Residues H111 and H115 each contribute to the Fe cation site. Substrate is bound by residues 134-138, D167, G180, D184, and N278; that span reads LVSGG. Residue D306 coordinates Fe cation.

This sequence belongs to the KAE1 / TsaD family. The cofactor is Fe(2+).

The protein localises to the cytoplasm. It catalyses the reaction L-threonylcarbamoyladenylate + adenosine(37) in tRNA = N(6)-L-threonylcarbamoyladenosine(37) in tRNA + AMP + H(+). Functionally, required for the formation of a threonylcarbamoyl group on adenosine at position 37 (t(6)A37) in tRNAs that read codons beginning with adenine. Is involved in the transfer of the threonylcarbamoyl moiety of threonylcarbamoyl-AMP (TC-AMP) to the N6 group of A37, together with TsaE and TsaB. TsaD likely plays a direct catalytic role in this reaction. The protein is tRNA N6-adenosine threonylcarbamoyltransferase of Cyanothece sp. (strain PCC 7425 / ATCC 29141).